Here is a 485-residue protein sequence, read N- to C-terminus: Noelin (485 aa).

Positions 1 to 16 (MSVPLLKIGVVLSTMA) are cleaved as a signal peptide. N-linked (GlcNAc...) asparagine glycans are attached at residues N33, N103, N187, N288, N307, N394, N431, and N473. Residues 87-225 (RDARTKQLRQ…ERLRACMQKL (139 aa)) adopt a coiled-coil conformation. The Olfactomedin-like domain occupies 226 to 478 (ACGKLTGISD…QILYNVTLFH (253 aa)). The cysteines at positions 227 and 409 are disulfide-linked.

Homotetramer; disulfide-linked. Dimer of dimers, giving rise to a V-shaped homotretramer. Component of the AMPAR complex. Post-translationally, glycosylated.

The protein resides in the secreted. Its subcellular location is the synapse. The protein localises to the endoplasmic reticulum. It localises to the cell projection. It is found in the axon. The protein resides in the perikaryon. Its function is as follows. Contributes to the regulation of axonal growth. May play an important role in regulating the production of neural crest cells by the neural tube. The chain is Noelin (OLFM1) from Gallus gallus (Chicken).